The primary structure comprises 91 residues: UPF0250 protein PP_4802 (91 aa).

It belongs to the UPF0250 family.

This chain is UPF0250 protein PP_4802, found in Pseudomonas putida (strain ATCC 47054 / DSM 6125 / CFBP 8728 / NCIMB 11950 / KT2440).